A 210-amino-acid chain; its full sequence is Acetoin utilization protein AcuA (210 aa).

Residues Val19 to Lys189 form the N-acetyltransferase domain.

It belongs to the acetyltransferase family. Monomer.

Its pathway is ketone degradation; acetoin degradation. In terms of biological role, part of the acuABC operon, which is possibly involved in the breakdown of acetoin and butanediol. Acts as an acetyltransferase inactivating acetyl-CoA synthetase AcsA via acetylation at a Lys residue. The sequence is that of Acetoin utilization protein AcuA from Bacillus licheniformis (strain ATCC 14580 / DSM 13 / JCM 2505 / CCUG 7422 / NBRC 12200 / NCIMB 9375 / NCTC 10341 / NRRL NRS-1264 / Gibson 46).